The primary structure comprises 301 residues: Homoserine O-acetyltransferase (301 aa).

The Acyl-thioester intermediate role is filled by C142. Residues K163 and S192 each contribute to the substrate site. H235 (proton acceptor) is an active-site residue. The active site involves E237. A substrate-binding site is contributed by R249.

This sequence belongs to the MetA family.

It localises to the cytoplasm. The enzyme catalyses L-homoserine + acetyl-CoA = O-acetyl-L-homoserine + CoA. It functions in the pathway amino-acid biosynthesis; L-methionine biosynthesis via de novo pathway; O-acetyl-L-homoserine from L-homoserine: step 1/1. In terms of biological role, transfers an acetyl group from acetyl-CoA to L-homoserine, forming acetyl-L-homoserine. The polypeptide is Homoserine O-acetyltransferase (Bacillus cereus (strain AH187)).